A 102-amino-acid chain; its full sequence is uncharacterized protein (102 aa).

Positions 1-71 (MKRMIRSHGR…GSANETSACT (71 aa)) are disordered. Residues 1 to 79 (MKRMIRSHGR…CTRTDHQKAD (79 aa)) are Extracellular-facing. A compositionally biased stretch (polar residues) spans 56 to 71 (SSGTRRGSANETSACT). An N-linked (GlcNAc...) asparagine; by host glycan is attached at Asn-65. A helical transmembrane segment spans residues 80 to 97 (IGLWFMFLVFGLCSWLAM). The Cytoplasmic segment spans residues 98–102 (RYRAQ).

This sequence belongs to the HHV-5 UL15A protein family.

It is found in the host membrane. This is an uncharacterized protein from Human cytomegalovirus (strain AD169) (HHV-5).